Here is a 499-residue protein sequence, read N- to C-terminus: Putative hydrolase YuaR (499 aa).

Residues 1–26 form the signal peptide; sequence MRVIMKPLRRTLVFFIFSVFLCGTVS. Positions 94–393 constitute an AB hydrolase-1 domain; sequence GSVIIISGGP…DAFPAVNFER (300 aa). Ser207 functions as the Nucleophile in the catalytic mechanism. Asp433 is a catalytic residue. Catalysis depends on His460, which acts as the Proton donor.

Belongs to the peptidase S33 family.

This Escherichia coli (strain K12) protein is Putative hydrolase YuaR (yuaR).